Reading from the N-terminus, the 86-residue chain is Small ribosomal subunit protein bS16 (86 aa).

It belongs to the bacterial ribosomal protein bS16 family.

The chain is Small ribosomal subunit protein bS16 from Bordetella bronchiseptica (strain ATCC BAA-588 / NCTC 13252 / RB50) (Alcaligenes bronchisepticus).